The following is a 260-amino-acid chain: 3'-5' ssDNA/RNA exonuclease TatD (260 aa).

Glutamate 92, histidine 128, and histidine 153 together coordinate a divalent metal cation.

It belongs to the metallo-dependent hydrolases superfamily. TatD-type hydrolase family. TatD subfamily. As to quaternary structure, monomer. The cofactor is Mg(2+).

It localises to the cytoplasm. Its function is as follows. 3'-5' exonuclease that prefers single-stranded DNA and RNA. May play a role in the H(2)O(2)-induced DNA damage repair. The protein is 3'-5' ssDNA/RNA exonuclease TatD of Pantoea vagans (strain C9-1) (Pantoea agglomerans (strain C9-1)).